The primary structure comprises 89 residues: Small ribosomal subunit protein uS15 (89 aa).

Positions 1–24 (MALTQTKKQELISQYQAHETDTGS) are disordered.

This sequence belongs to the universal ribosomal protein uS15 family. As to quaternary structure, part of the 30S ribosomal subunit. Forms a bridge to the 50S subunit in the 70S ribosome, contacting the 23S rRNA.

Functionally, one of the primary rRNA binding proteins, it binds directly to 16S rRNA where it helps nucleate assembly of the platform of the 30S subunit by binding and bridging several RNA helices of the 16S rRNA. In terms of biological role, forms an intersubunit bridge (bridge B4) with the 23S rRNA of the 50S subunit in the ribosome. This is Small ribosomal subunit protein uS15 from Microcystis aeruginosa (strain NIES-843 / IAM M-2473).